The following is a 228-amino-acid chain: Isoprenyl transferase (228 aa).

The active site involves Asp-9. Asp-9 serves as a coordination point for Mg(2+). Residues 10–13, Trp-14, Arg-22, His-26, and 54–56 each bind substrate; these read GNGR and STE. Asn-57 acts as the Proton acceptor in catalysis. Substrate contacts are provided by residues Trp-58, Arg-60, Arg-175, and 181 to 183; that span reads RMS. Glu-194 contacts Mg(2+).

It belongs to the UPP synthase family. In terms of assembly, homodimer. Requires Mg(2+) as cofactor.

Catalyzes the condensation of isopentenyl diphosphate (IPP) with allylic pyrophosphates generating different type of terpenoids. In Treponema pallidum (strain Nichols), this protein is Isoprenyl transferase.